The chain runs to 377 residues: Formate dehydrogenase, mitochondrial (377 aa).

Residues 1–29 constitute a mitochondrion transit peptide; the sequence is MAAMWRAAARQLVDRAVGSRAAHTSAGSK. The substrate site is built by Ile121 and Asn145. Residues Thr146, Asp220, 255-259, Asn281, Asp307, and 331-334 contribute to the NAD(+) site; these read PLTEK and HISG.

Belongs to the D-isomer specific 2-hydroxyacid dehydrogenase family. FDH subfamily. As to quaternary structure, homodimer.

The protein localises to the mitochondrion. The catalysed reaction is formate + NAD(+) = CO2 + NADH. Functionally, catalyzes the NAD(+)-dependent oxidation of formate to carbon dioxide. Involved in the cell stress response. This chain is Formate dehydrogenase, mitochondrial, found in Hordeum vulgare (Barley).